We begin with the raw amino-acid sequence, 289 residues long: uncharacterized protein (289 aa).

Positions 1-19 are cleaved as a signal peptide; that stretch reads MAKWLGAPLARGVSTATRA. The next 2 helical transmembrane spans lie at 90-110 and 257-277; these read GLLA…GWGV and AALS…LVFA.

Its subcellular location is the cell membrane. This is an uncharacterized protein from Mycobacterium tuberculosis (strain ATCC 25618 / H37Rv).